A 504-amino-acid chain; its full sequence is MEEFQVYLELNRSRRHDFLYPLIFREYIYALAHEHGLNKSMIFFENQGYGNKFSSLIVKRLILRMDQQNRLISSANDSNQNPVFGHNNNLYSQMIAAGFAVIVEIPFSLRLISYSQGAEAAKSHNFQSIHSIFPFLEDKFSHLNYVLEALIPHPIHLEILVQALRYWVKDASSLHLLRFSLYEYCNLKSFITPKKSISIFNPRLFLFLYNSHTCEYESIFLFLRNQSSHLRSTSSGVFLERIFFYGKIKYLGEVFYNDFQNNLWLFKDPFIHFIRYQGKSILASKDTSLLINKWKYYFVDLWQYYFYLWSQSGRVRINQLSKYSLDFLGYLSSVRLNPSVVRSQMLENSFLIDNAVKTLDTRIPIISIIGSLSKAKFCNTLGHPISKPTWADSPDSDIIDRFVRISRNLSHYHSGSSKKKSLYRIKYILRFSCVKTLARKHKSTVRAFLKKLGSEFLEEFFTETEEEHVFSLIFPRGFFALRKVYRGRIWYLDIICINALVNHS.

It belongs to the intron maturase 2 family. MatK subfamily.

The protein localises to the plastid. It localises to the chloroplast. Its function is as follows. Usually encoded in the trnK tRNA gene intron. Probably assists in splicing its own and other chloroplast group II introns. This is Maturase K from Gossypium gossypioides (Mexican cotton).